We begin with the raw amino-acid sequence, 167 residues long: MINVEIIRNYNKWREHRKINKGLIKKITQNVLVRFDNFSKIKQFELSILLTNTAEILTLNQQFRSIEKATNVLSFPNNELNWHNLYSKLEFLYYSDYMHLGDIAFCYEVIYNESCEQQKTFENHFIHMLIHSILHLIGFDHQNDTDANIMESLEIEILSYFGIPSPY.

Residues histidine 131, histidine 135, and histidine 141 each coordinate Zn(2+).

This sequence belongs to the endoribonuclease YbeY family. It depends on Zn(2+) as a cofactor.

It localises to the cytoplasm. Single strand-specific metallo-endoribonuclease involved in late-stage 70S ribosome quality control and in maturation of the 3' terminus of the 16S rRNA. The sequence is that of Endoribonuclease YbeY from Rickettsia prowazekii (strain Madrid E).